The following is a 1006-amino-acid chain: Phosphatidylinositol 4,5-bisphosphate 5-phosphatase A (1006 aa).

A disordered region spans residues Met1 to Thr416. Positions Val27–Gln41 are enriched in polar residues. At Arg56 the chain carries Asymmetric dimethylarginine; alternate. Arg56 carries the omega-N-methylarginine; alternate modification. An Omega-N-methylarginine modification is found at Arg65. Asymmetric dimethylarginine is present on Arg76. At Arg83 the chain carries Asymmetric dimethylarginine; alternate. Omega-N-methylarginine; alternate is present on Arg83. The span at Gly94 to Gly112 shows a compositional bias: polar residues. An RSXSXX motif 1 motif is present at residues Arg102–Ala107. The segment covering Leu180–Glu193 has biased composition (low complexity). The span at Pro196–Val209 shows a compositional bias: pro residues. A compositionally biased stretch (low complexity) spans Leu210–Ser234. Residues Pro256–Pro273 are compositionally biased toward polar residues. 2 positions are modified to phosphoserine: Ser291 and Ser324. Residues Val337–Ser347 show a composition bias toward pro residues. The SH3-binding motif lies at Pro345–Arg350. 2 stretches are compositionally biased toward low complexity: residues Pro348 to Pro360 and Thr398 to Ser409. Residues Arg350–Ser355 carry the RSXSXX motif 2 motif. The interval Ile425–Phe728 is catalytic. Residues Leu729 to Ser840 are required for ruffle localization. Residues Ser844–Ser858 are compositionally biased toward low complexity. The segment at Ser844–Pro1006 is disordered. 2 short sequence motifs (RSXSXX motif) span residues Arg874–Gly879 and Arg885–Gly890. At Ser903 the chain carries Phosphoserine. Residues Arg911–Gln916 carry the RSXSXX motif 5 motif. The segment covering Arg927–Gly946 has biased composition (low complexity). Residue Ser990 is modified to Phosphoserine.

The protein belongs to the inositol 1,4,5-trisphosphate 5-phosphatase type II family.

The protein resides in the cytoplasm. It catalyses the reaction 1D-myo-inositol 1,4,5-trisphosphate + H2O = 1D-myo-inositol 1,4-bisphosphate + phosphate. The catalysed reaction is 1D-myo-inositol 1,3,4,5-tetrakisphosphate + H2O = 1D-myo-inositol 1,3,4-trisphosphate + phosphate. The enzyme catalyses a 1,2-diacyl-sn-glycero-3-phospho-(1D-myo-inositol-4,5-bisphosphate) + H2O = a 1,2-diacyl-sn-glycero-3-phospho-(1D-myo-inositol 4-phosphate) + phosphate. Its function is as follows. Inositol 5-phosphatase, which converts inositol 1,4,5-trisphosphate to inositol 1,4-bisphosphate. Also converts phosphatidylinositol 4,5-bisphosphate to phosphatidylinositol 4-phosphate and inositol 1,3,4,5-tetrakisphosphate to inositol 1,3,4-trisphosphate in vitro. May be involved in modulation of the function of inositol and phosphatidylinositol polyphosphate-binding proteins that are present at membranes ruffles. In Homo sapiens (Human), this protein is Phosphatidylinositol 4,5-bisphosphate 5-phosphatase A (INPP5J).